A 412-amino-acid polypeptide reads, in one-letter code: Putative competence-damage inducible protein (412 aa).

Belongs to the CinA family.

The sequence is that of Putative competence-damage inducible protein from Bacillus cereus (strain ATCC 10987 / NRS 248).